Here is a 434-residue protein sequence, read N- to C-terminus: Serine--tRNA ligase (434 aa).

239–241 (TAE) is a binding site for L-serine. 270 to 272 (RSE) is an ATP binding site. Glu-293 is a binding site for L-serine. 357-360 (EISS) contributes to the ATP binding site. L-serine is bound at residue Ser-393.

It belongs to the class-II aminoacyl-tRNA synthetase family. Type-1 seryl-tRNA synthetase subfamily. Homodimer. The tRNA molecule binds across the dimer.

It localises to the cytoplasm. The enzyme catalyses tRNA(Ser) + L-serine + ATP = L-seryl-tRNA(Ser) + AMP + diphosphate + H(+). It catalyses the reaction tRNA(Sec) + L-serine + ATP = L-seryl-tRNA(Sec) + AMP + diphosphate + H(+). It functions in the pathway aminoacyl-tRNA biosynthesis; selenocysteinyl-tRNA(Sec) biosynthesis; L-seryl-tRNA(Sec) from L-serine and tRNA(Sec): step 1/1. In terms of biological role, catalyzes the attachment of serine to tRNA(Ser). Is also able to aminoacylate tRNA(Sec) with serine, to form the misacylated tRNA L-seryl-tRNA(Sec), which will be further converted into selenocysteinyl-tRNA(Sec). This chain is Serine--tRNA ligase, found in Pseudoalteromonas translucida (strain TAC 125).